The chain runs to 892 residues: Translation initiation factor IF-2 (892 aa).

Disordered stretches follow at residues 32 to 102 (LAQA…PGDA) and 114 to 300 (KAPE…KQAE). The segment covering 35–48 (AGSSDTKNSPASKA) has biased composition (polar residues). The span at 139-166 (QEEKKESSEETSPERVEETLIIRTRTEP) shows a compositional bias: basic and acidic residues. A compositionally biased stretch (low complexity) spans 200–211 (AASTEETTQQQP). Residues 212–224 (RQNDAASYNNKQQ) show a composition bias toward polar residues. Over residues 225 to 238 (PSGTSSRPASSAPS) the composition is skewed to low complexity. Basic and acidic residues predominate over residues 252–276 (RGSERDRSKRSDESVKAFTGRDRYG). One can recognise a tr-type G domain in the interval 397–566 (IRSPIVAFMG…ALQAEVLELK (170 aa)). Residues 406 to 413 (GHVDHGKT) are G1. 406–413 (GHVDHGKT) serves as a coordination point for GTP. The segment at 431–435 (AITQH) is G2. Residues 452–455 (DTPG) form a G3 region. Residues 452-456 (DTPGH) and 506-509 (NKCD) each bind GTP. A G4 region spans residues 506–509 (NKCD). The segment at 542 to 544 (SAK) is G5.

This sequence belongs to the TRAFAC class translation factor GTPase superfamily. Classic translation factor GTPase family. IF-2 subfamily.

The protein localises to the cytoplasm. In terms of biological role, one of the essential components for the initiation of protein synthesis. Protects formylmethionyl-tRNA from spontaneous hydrolysis and promotes its binding to the 30S ribosomal subunits. Also involved in the hydrolysis of GTP during the formation of the 70S ribosomal complex. The protein is Translation initiation factor IF-2 of Chlamydia trachomatis serovar A (strain ATCC VR-571B / DSM 19440 / HAR-13).